We begin with the raw amino-acid sequence, 91 residues long: uncharacterized protein (91 aa).

This is an uncharacterized protein from Acidianus convivator (ABV).